We begin with the raw amino-acid sequence, 128 residues long: Sulfurtransferase TusD (128 aa).

The Cysteine persulfide intermediate role is filled by C78.

This sequence belongs to the DsrE/TusD family. In terms of assembly, heterohexamer, formed by a dimer of trimers. The hexameric TusBCD complex contains 2 copies each of TusB, TusC and TusD. The TusBCD complex interacts with TusE.

It localises to the cytoplasm. Its function is as follows. Part of a sulfur-relay system required for 2-thiolation of 5-methylaminomethyl-2-thiouridine (mnm(5)s(2)U) at tRNA wobble positions. Accepts sulfur from TusA and transfers it in turn to TusE. This chain is Sulfurtransferase TusD, found in Escherichia coli O7:K1 (strain IAI39 / ExPEC).